We begin with the raw amino-acid sequence, 471 residues long: UTP--glucose-1-phosphate uridylyltransferase (471 aa).

UTP-binding positions include 87–90 (LNGG), K101, Q164, and G193. 89–90 (GG) provides a ligand contact to substrate. Residues H194 and 222 to 224 (NSD) each bind substrate. The UTP site is built by D224 and K362.

This sequence belongs to the UDPGP type 1 family.

The protein resides in the cytoplasm. It carries out the reaction alpha-D-glucose 1-phosphate + UTP + H(+) = UDP-alpha-D-glucose + diphosphate. Plays a central role as a glucosyl donor in cellular metabolic pathways. This chain is UTP--glucose-1-phosphate uridylyltransferase (UGP), found in Astragalus penduliflorus (Mountain lentil).